We begin with the raw amino-acid sequence, 631 residues long: DNA mismatch repair protein MutL (631 aa).

Residues 389–423 are disordered; it reads GEREASRQAGGQRVQETQMSSYGSGQSGGRGRSYA.

This sequence belongs to the DNA mismatch repair MutL/HexB family.

Its function is as follows. This protein is involved in the repair of mismatches in DNA. It is required for dam-dependent methyl-directed DNA mismatch repair. May act as a 'molecular matchmaker', a protein that promotes the formation of a stable complex between two or more DNA-binding proteins in an ATP-dependent manner without itself being part of a final effector complex. This Shewanella loihica (strain ATCC BAA-1088 / PV-4) protein is DNA mismatch repair protein MutL.